Reading from the N-terminus, the 190-residue chain is Histone H5 (190 aa).

The segment at 1–29 is disordered; it reads MTESLVLSPAPAKPKRVKASRRSASHPTY. A compositionally biased stretch (basic residues) spans 13–24; that stretch reads KPKRVKASRRSA. Phosphoserine is present on residues serine 23, serine 30, serine 146, and serine 167. In terms of domain architecture, H15 spans 25 to 98; the sequence is SHPTYSEMIA…GASGSFRLAK (74 aa). The interval 87-190 is disordered; the sequence is GVGASGSFRL…SGARKSPKKK (104 aa). A compositionally biased stretch (basic residues) spans 104-190; that stretch reads RSPGKKKKAV…SGARKSPKKK (87 aa).

This sequence belongs to the histone H1/H5 family. Erythroid cells.

The protein resides in the nucleus. It is found in the chromosome. Histone H5 performs the same function as H1, being necessary for the condensation of nucleosome chains into higher order structures, and replaces histone H1 in certain cells. This Gallus gallus (Chicken) protein is Histone H5.